Here is a 364-residue protein sequence, read N- to C-terminus: DNA polymerase processivity factor (364 aa).

Disordered stretches follow at residues Met1–Pro24, Asp284–Glu306, and Val325–Met364.

It belongs to the herpesviridae polymerase accessory protein family.

In terms of biological role, accessory subunit of the DNA polymerase that acts to increase the processivity of polymerization. The polypeptide is DNA polymerase processivity factor (U27) (Homo sapiens (Human)).